The chain runs to 681 residues: Mating-type protein beta1-1 (681 aa).

Positions 165-227 form a DNA-binding region, homeobox; TALE-type; the sequence is DKNEPTSPTP…DARRRIGWNE (63 aa). The span at 307–318 shows a compositional bias: basic and acidic residues; that stretch reads LKNDEARRKREA. Disordered regions lie at residues 307 to 341, 353 to 381, and 394 to 466; these read LKND…SPAS, AIDS…SPLC, and SPVK…SDPF. Residues 413–430 show a composition bias toward low complexity; sequence TSAAPSPQPSLLPKLTPT.

This sequence belongs to the TALE/M-ATYP homeobox family. In terms of assembly, may dimerize.

It localises to the nucleus. Its function is as follows. Has a major regulatory role in sexual and asexual development. It may bind DNA itself or it may have a role in preventing DNA-binding of another protein. The protein is Mating-type protein beta1-1 of Coprinopsis cinerea (Inky cap fungus).